The following is a 40-amino-acid chain: Adenylate kinase (40 aa).

An ATP-binding site is contributed by 10-15 (GAGKGT). Residues 30–40 (STGDMFIKAIK) are NMP. An AMP-binding site is contributed by threonine 31.

This sequence belongs to the adenylate kinase family. In terms of assembly, monomer.

It is found in the cytoplasm. It carries out the reaction AMP + ATP = 2 ADP. The protein operates within purine metabolism; AMP biosynthesis via salvage pathway; AMP from ADP: step 1/1. Its function is as follows. Catalyzes the reversible transfer of the terminal phosphate group between ATP and AMP. Plays an important role in cellular energy homeostasis and in adenine nucleotide metabolism. The sequence is that of Adenylate kinase (adk) from Staphylococcus carnosus.